The following is a 256-amino-acid chain: Nuclear shuttle protein (256 aa).

Residues 18-39 (NITNRYPIKRKYVAGHTRPCVR) carry the Bipartite nuclear localization signal motif. A Nuclear localization signal motif is present at residues 81–96 (SRGPSGDGRSRDYIKL). The interval 150-187 (ELFGPYSACYVNLRLLNNQQHRYRVLHSVKRFVSSSGD) is interaction with Arabidopsis thaliana NSI protein.

This sequence belongs to the begomovirus nuclear shuttle protein family. As to quaternary structure, binds to single-stranded and double-stranded viral DNA. Interacts with the host nuclear shuttle interacting (NSI) protein. This interaction may allow NSP to recruit NSI monomers to the viral genome and thus regulate nuclear export of viral genome by NSP.

The protein resides in the host nucleus. Its subcellular location is the host cytoplasm. It localises to the host cell membrane. Its function is as follows. Binds to the genomic viral ssDNA, shuttles it into and out of the cell nucleus. Begomoviruses use 2 proteins to transport their DNA from cell to cell. The nuclear shuttle protein (NSP) shuttles it between nucleus and cytoplasm and the movement protein (MP) probably transports the DNA-NSP complex to the cell periphery and facilitates movement across the cell wall. In Hewittia sublobata (Coralbush), this protein is Nuclear shuttle protein.